Reading from the N-terminus, the 816-residue chain is Leucine--tRNA ligase (816 aa).

Residues 40–51 carry the 'HIGH' region motif; that stretch reads SYPSGAQLHAGH. Positions 576–580 match the 'KMSKS' region motif; sequence KMSKS. Lysine 579 serves as a coordination point for ATP.

Belongs to the class-I aminoacyl-tRNA synthetase family.

It is found in the cytoplasm. It carries out the reaction tRNA(Leu) + L-leucine + ATP = L-leucyl-tRNA(Leu) + AMP + diphosphate. This chain is Leucine--tRNA ligase, found in Clostridium beijerinckii (strain ATCC 51743 / NCIMB 8052) (Clostridium acetobutylicum).